A 147-amino-acid polypeptide reads, in one-letter code: Austinoid biosynthesis cluster protein H (147 aa).

It belongs to the trt14 isomerase family. Homodimer.

It functions in the pathway secondary metabolite biosynthesis; terpenoid biosynthesis. Part of the gene cluster that mediates the biosynthesis of calidodehydroaustin, a fungal meroterpenoid. The first step of the pathway is the synthesis of 3,5-dimethylorsellinic acid by the polyketide synthase ausA. 3,5-dimethylorsellinic acid is then prenylated by the polyprenyl transferase ausN. Further epoxidation by the FAD-dependent monooxygenase ausM and cyclization by the probable terpene cyclase ausL lead to the formation of protoaustinoid A. Protoaustinoid A is then oxidized to spiro-lactone preaustinoid A3 by the combined action of the FAD-binding monooxygenases ausB and ausC, and the dioxygenase ausE. Acid-catalyzed keto-rearrangement and ring contraction of the tetraketide portion of preaustinoid A3 by ausJ lead to the formation of preaustinoid A4. The aldo-keto reductase ausK, with the help of ausH, is involved in the next step by transforming preaustinoid A4 into isoaustinone which is in turn hydroxylated by the P450 monooxygenase ausI to form austinolide. The cytochrome P450 monooxygenase ausG modifies austinolide to austinol. Austinol is further acetylated to austin by the O-acetyltransferase ausP, which spontaneously changes to dehydroaustin. The cytochrome P450 monooxygenase ausR then converts dehydroaustin is into 7-dehydrodehydroaustin. The hydroxylation catalyzed by ausR permits the O-acetyltransferase ausQ to add an additional acetyl group to the molecule, leading to the formation of acetoxydehydroaustin. The short chain dehydrogenase ausT catalyzes the reduction of the double bond present between carbon atoms 1 and 2 to convert 7-dehydrodehydroaustin into 1,2-dihydro-7-hydroxydehydroaustin. AusQ catalyzes not only an acetylation reaction but also the addition of the PKS ausV diketide product to 1,2-dihydro-7-hydroxydehydroaustin, forming precalidodehydroaustin. Finally, the iron/alpha-ketoglutarate-dependent dioxygenase converts precalidodehydroaustin into calidodehydroaustin. The polypeptide is Austinoid biosynthesis cluster protein H (Aspergillus calidoustus).